We begin with the raw amino-acid sequence, 544 residues long: Membrane protein insertase YidC (544 aa).

Residues 6–26 (NILLIGLLFVSFLLWQQWQAD) form a helical membrane-spanning segment. The segment at 34–58 (AAQTQSSIPASTVADSHSSDVPDAD) is disordered. Residues 39-49 (SSIPASTVADS) are compositionally biased toward polar residues. 4 helical membrane-spanning segments follow: residues 345 to 365 (LLMF…LITL), 423 to 443 (GGCL…WVLL), 460 to 480 (LSVQ…MFVM), and 503 to 523 (VIFT…WLVG).

Belongs to the OXA1/ALB3/YidC family. Type 1 subfamily. Interacts with the Sec translocase complex via SecD. Specifically interacts with transmembrane segments of nascent integral membrane proteins during membrane integration.

The protein resides in the cell inner membrane. Required for the insertion and/or proper folding and/or complex formation of integral membrane proteins into the membrane. Involved in integration of membrane proteins that insert both dependently and independently of the Sec translocase complex, as well as at least some lipoproteins. Aids folding of multispanning membrane proteins. This is Membrane protein insertase YidC from Shewanella halifaxensis (strain HAW-EB4).